The primary structure comprises 119 residues: Large ribosomal subunit protein bL19 (119 aa).

It belongs to the bacterial ribosomal protein bL19 family.

Functionally, this protein is located at the 30S-50S ribosomal subunit interface and may play a role in the structure and function of the aminoacyl-tRNA binding site. The sequence is that of Large ribosomal subunit protein bL19 from Pelobacter propionicus (strain DSM 2379 / NBRC 103807 / OttBd1).